Here is a 396-residue protein sequence, read N- to C-terminus: Probable sugar efflux transporter (396 aa).

The next 12 membrane-spanning stretches (helical) occupy residues 15 to 35, 51 to 71, 84 to 104, 109 to 129, 137 to 157, 168 to 188, 209 to 229, 245 to 265, 273 to 293, 297 to 317, 333 to 353, and 365 to 385; these read VLIM…PVAM, GLMM…AMLA, LFII…FWIL, MCIA…VMRI, QALG…LPIG, VTFG…IRLL, PLLL…FTAY, NFAT…SLLF, PTKF…LLLF, TIIA…CIGL, VATA…ALFG, and IGYT…TTHL.

It belongs to the major facilitator superfamily. SotB (TC 2.A.1.2) family.

It is found in the cell inner membrane. In terms of biological role, involved in the efflux of sugars. The physiological role may be the reduction of the intracellular concentration of toxic sugars or sugar metabolites. The sequence is that of Probable sugar efflux transporter from Haemophilus influenzae (strain ATCC 51907 / DSM 11121 / KW20 / Rd).